The chain runs to 148 residues: Hemoglobin subunit beta-B (148 aa).

In terms of domain architecture, Globin spans 3 to 148 (DWTDAERAAI…VVSALGRQYH (146 aa)). Heme b contacts are provided by His64 and His93.

The protein belongs to the globin family. In terms of assembly, heterotetramer of two alpha chains and two beta chains. Red blood cells.

Its function is as follows. Involved in oxygen transport from gills to the various peripheral tissues. In Seriola quinqueradiata (Five-ray yellowtail), this protein is Hemoglobin subunit beta-B (hbb2).